The chain runs to 479 residues: Anaerobic nitric oxide reductase flavorubredoxin (479 aa).

The interval 30–210 is zinc metallo-hydrolase; sequence LRGSSYNSYL…PFSRLVTPKI (181 aa). Fe cation contacts are provided by His-79, Glu-81, Asp-83, His-147, Asp-166, and His-227. The region spanning 254-393 is the Flavodoxin-like domain; it reads ITIFYDTMSN…LCREHGREIA (140 aa). FMN contacts are provided by residues 260–264 and 342–369; these read TMSNN and AFGS…EMSL. A Rubredoxin-like domain is found at 423–474; the sequence is GPRMQCSVCQWIYDPAKGEPMQDVAPGTPWSEVPDNFLCPECSLGKDVFEEL. 4 residues coordinate Fe cation: Cys-428, Cys-431, Cys-461, and Cys-464.

In the N-terminal section; belongs to the zinc metallo-hydrolase group 3 family. As to quaternary structure, homotetramer. Requires Fe cation as cofactor. It depends on FMN as a cofactor.

It is found in the cytoplasm. Its pathway is nitrogen metabolism; nitric oxide reduction. Anaerobic nitric oxide reductase; uses NADH to detoxify nitric oxide (NO), protecting several 4Fe-4S NO-sensitive enzymes. Has at least 2 reductase partners, only one of which (NorW, flavorubredoxin reductase) has been identified. NO probably binds to the di-iron center; electrons enter from the NorW at rubredoxin and are transferred sequentially to the FMN center and the di-iron center. Also able to function as an aerobic oxygen reductase. The polypeptide is Anaerobic nitric oxide reductase flavorubredoxin (Shigella boydii serotype 4 (strain Sb227)).